A 1170-amino-acid chain; its full sequence is WD repeat-containing protein 35 (1170 aa).

5 WD repeats span residues 12-51 (PNNV…DDSK), 69-108 (GHSG…WYEE), 113-152 (RNKS…IWGK), 154-193 (LKGI…IMKM), and 491-528 (GTRD…LIQK).

Component of the IFT complex A (IFT-A) complex. IFT-A complex is divided into a core subcomplex composed of IFT122:IFT140:WDR19 which is associated with TULP3 and a peripheral subcomplex composed of IFT43:WDR35:TTC21B. Interacts directy with IFT122, ITF43 and TTC21B. Interacts with IFT43. Interacts with CFAP61. As to expression, expressed at high levels in testis and at lower levels in the brain (at protein level). Also present in other tissues, including heart, uterus, spinal cord, ovary, liver, kidney, lung, pancreas and stomach.

It localises to the cytoplasm. The protein localises to the cytoskeleton. It is found in the microtubule organizing center. The protein resides in the centrosome. Its subcellular location is the cilium axoneme. It localises to the cilium basal body. Functionally, as a component of the IFT complex A (IFT-A), a complex required for retrograde ciliary transport and entry into cilia of G protein-coupled receptors (GPCRs), it is involved in ciliogenesis and ciliary protein trafficking. May promote CASP3 activation and TNF-stimulated apoptosis. In Rattus norvegicus (Rat), this protein is WD repeat-containing protein 35 (Wdr35).